A 75-amino-acid polypeptide reads, in one-letter code: Dermaseptin-S11 (75 aa).

Residues 1 to 22 (MAFLKKSLFLVLFLGMVSLSIC) form the signal peptide. A propeptide spanning residues 23–45 (EEEKRENEDEEEQEDDEQSEEKR) is cleaved from the precursor. A disordered region spans residues 25–44 (EKRENEDEEEQEDDEQSEEK). Positions 30–41 (EDEEEQEDDEQS) are enriched in acidic residues.

The protein belongs to the frog skin active peptide (FSAP) family. Dermaseptin subfamily. In terms of tissue distribution, expressed by the skin glands.

Its subcellular location is the secreted. The protein localises to the target cell membrane. Antimicrobial peptide with activity against Gram-positive and Gram-negative bacteria, and fungi. Has hemolytic activity. The sequence is that of Dermaseptin-S11 from Phyllomedusa sauvagei (Sauvage's leaf frog).